We begin with the raw amino-acid sequence, 397 residues long: Subtilisin-like protease 12 (397 aa).

A signal peptide spans 1–19; sequence MSIFKMMLIYFAILWVVNA. Residues 20 to 116 constitute a propeptide that is removed on maturation; that stretch reads AQLLDIDPQG…VEPNKEMQVA (97 aa). Positions 35-115 constitute an Inhibitor I9 domain; sequence YIVVMKDRVS…FVEPNKEMQV (81 aa). 3 N-linked (GlcNAc...) asparagine glycosylation sites follow: Asn-123, Asn-136, and Asn-150. Residues 125 to 397 form the Peptidase S8 domain; it reads TWGLSRISHK…NKLLYNGSGA (273 aa). Residues Asp-157 and His-188 each act as charge relay system in the active site. 3 N-linked (GlcNAc...) asparagine glycosylation sites follow: Asn-249, Asn-305, and Asn-334. Ser-343 acts as the Charge relay system in catalysis. N-linked (GlcNAc...) asparagine glycans are attached at residues Asn-385 and Asn-393.

This sequence belongs to the peptidase S8 family.

The protein localises to the secreted. Secreted subtilisin-like serine protease with keratinolytic activity that contributes to pathogenicity. This Trichophyton verrucosum (strain HKI 0517) protein is Subtilisin-like protease 12 (SUB12).